The chain runs to 141 residues: MEKVIKQIVTINLEAGKANPAKVGKDLAPTGINLLGFCNQYNEMTKLQLGLVVPAKITIYEDRSFNVKLKTPPAAFLLKKYAGVEKGAAQPGKEVVGSITTQQLRTIAEIKLPDLNTTSIDRAMKIIAGTARNMGINIEDD.

It belongs to the universal ribosomal protein uL11 family. Part of the ribosomal stalk of the 50S ribosomal subunit. Interacts with L10 and the large rRNA to form the base of the stalk. L10 forms an elongated spine to which L12 dimers bind in a sequential fashion forming a multimeric L10(L12)X complex. One or more lysine residues are methylated.

Forms part of the ribosomal stalk which helps the ribosome interact with GTP-bound translation factors. This chain is Large ribosomal subunit protein uL11B, found in Halalkalibacterium halodurans (strain ATCC BAA-125 / DSM 18197 / FERM 7344 / JCM 9153 / C-125) (Bacillus halodurans).